A 210-amino-acid polypeptide reads, in one-letter code: Large ribosomal subunit protein uL4 (210 aa).

Residues 41–52 are compositionally biased toward polar residues; it reads QTNARQGTASTK. Residues 41-71 are disordered; the sequence is QTNARQGTASTKTRAEVRGGGRKPWRQKGTG. Residues 60-71 are compositionally biased toward basic residues; that stretch reads GGRKPWRQKGTG.

The protein belongs to the universal ribosomal protein uL4 family. In terms of assembly, part of the 50S ribosomal subunit.

Its function is as follows. One of the primary rRNA binding proteins, this protein initially binds near the 5'-end of the 23S rRNA. It is important during the early stages of 50S assembly. It makes multiple contacts with different domains of the 23S rRNA in the assembled 50S subunit and ribosome. Functionally, forms part of the polypeptide exit tunnel. In Nostoc sp. (strain PCC 7120 / SAG 25.82 / UTEX 2576), this protein is Large ribosomal subunit protein uL4.